The following is a 194-amino-acid chain: CASP-like protein 2D1 (194 aa).

The segment covering M1–S16 has biased composition (basic and acidic residues). Residues M1–P26 form a disordered region. The Cytoplasmic portion of the chain corresponds to M1–K30. The helical transmembrane segment at I31–T51 threads the bilayer. Residues V52 to Y74 are Extracellular-facing. Residues M75–V95 form a helical membrane-spanning segment. The Cytoplasmic segment spans residues T96–Q110. Residues V111–G133 traverse the membrane as a helical segment. Residues D134 to K152 lie on the Extracellular side of the membrane. Residues L153 to I173 form a helical membrane-spanning segment. Residues S174–A194 are Cytoplasmic-facing.

The protein belongs to the Casparian strip membrane proteins (CASP) family. Homodimer and heterodimers.

The protein resides in the cell membrane. This chain is CASP-like protein 2D1, found in Arabidopsis thaliana (Mouse-ear cress).